Reading from the N-terminus, the 119-residue chain is MSINKNIARLRRAKSTRSHIRDLGVARLSVLRTGQHLYAQVFTADGSKVIAAANTLQADVKDGLKNGKNSDAAVKVGKLIAERAKAAGIEKVAFDRSGYRYHGRIKALADAAREGGLQF.

The protein belongs to the universal ribosomal protein uL18 family. As to quaternary structure, part of the 50S ribosomal subunit; part of the 5S rRNA/L5/L18/L25 subcomplex. Contacts the 5S and 23S rRNAs.

In terms of biological role, this is one of the proteins that bind and probably mediate the attachment of the 5S RNA into the large ribosomal subunit, where it forms part of the central protuberance. The sequence is that of Large ribosomal subunit protein uL18 from Xanthomonas oryzae pv. oryzae (strain PXO99A).